Here is a 274-residue protein sequence, read N- to C-terminus: Glutamate racemase (274 aa).

Residues 10-11 (DS) and 42-43 (YG) each bind substrate. Residue cysteine 73 is the Proton donor/acceptor of the active site. Position 74–75 (74–75 (NT)) interacts with substrate. Cysteine 184 serves as the catalytic Proton donor/acceptor. 185–186 (TH) provides a ligand contact to substrate.

The protein belongs to the aspartate/glutamate racemases family.

It carries out the reaction L-glutamate = D-glutamate. It participates in cell wall biogenesis; peptidoglycan biosynthesis. Provides the (R)-glutamate required for cell wall biosynthesis. In Latilactobacillus sakei subsp. sakei (strain 23K) (Lactobacillus sakei subsp. sakei), this protein is Glutamate racemase.